Here is a 519-residue protein sequence, read N- to C-terminus: Ribonuclease Y (519 aa).

The chain crosses the membrane as a helical span at residues 3-23 (LMIFAYIAIGAVLGAGTGYLL). Residues 209–272 (TVTAVTLPSE…QVAKMALERL (64 aa)) form the KH domain. Positions 335–428 (VLQHSLEVSA…VQAADSISGA (94 aa)) constitute an HD domain.

Belongs to the RNase Y family.

The protein localises to the cell membrane. Its function is as follows. Endoribonuclease that initiates mRNA decay. The chain is Ribonuclease Y from Nitratidesulfovibrio vulgaris (strain ATCC 29579 / DSM 644 / CCUG 34227 / NCIMB 8303 / VKM B-1760 / Hildenborough) (Desulfovibrio vulgaris).